The chain runs to 426 residues: Serine--tRNA ligase (426 aa).

227 to 229 is a binding site for L-serine; sequence TSE. ATP is bound by residues 258–260 and Val274; that span reads RKE. L-serine is bound at residue Glu281. An ATP-binding site is contributed by 345–348; the sequence is ELTS. Residue Thr380 coordinates L-serine.

This sequence belongs to the class-II aminoacyl-tRNA synthetase family. Type-1 seryl-tRNA synthetase subfamily. Homodimer. The tRNA molecule binds across the dimer.

It is found in the cytoplasm. It catalyses the reaction tRNA(Ser) + L-serine + ATP = L-seryl-tRNA(Ser) + AMP + diphosphate + H(+). The enzyme catalyses tRNA(Sec) + L-serine + ATP = L-seryl-tRNA(Sec) + AMP + diphosphate + H(+). Its pathway is aminoacyl-tRNA biosynthesis; selenocysteinyl-tRNA(Sec) biosynthesis; L-seryl-tRNA(Sec) from L-serine and tRNA(Sec): step 1/1. Functionally, catalyzes the attachment of serine to tRNA(Ser). Is also able to aminoacylate tRNA(Sec) with serine, to form the misacylated tRNA L-seryl-tRNA(Sec), which will be further converted into selenocysteinyl-tRNA(Sec). In Clavibacter michiganensis subsp. michiganensis (strain NCPPB 382), this protein is Serine--tRNA ligase.